Here is a 40-residue protein sequence, read N- to C-terminus: Putative NAD(P)-dependent glyceraldehyde-3-phosphate dehydrogenase PS5 (40 aa).

The sequence is that of Putative NAD(P)-dependent glyceraldehyde-3-phosphate dehydrogenase PS5 from Pinus strobus (Eastern white pine).